Consider the following 91-residue polypeptide: Soluble cytochrome b558 (91 aa).

A Cytochrome b5 heme-binding domain is found at 8-88; that stretch reads LPVFTLEQVA…LQRYLIGTLE (81 aa). Cysteines 25 and 54 form a disulfide. Heme contacts are provided by histidine 43 and histidine 71.

This is Soluble cytochrome b558 from Ectothiorhodospira shaposhnikovii (Ectothiorhodospira vacuolata).